A 741-amino-acid chain; its full sequence is Catalase-peroxidase (741 aa).

The signal sequence occupies residues Met1–Ala23. Residues Trp102–Tyr223 constitute a cross-link (tryptophyl-tyrosyl-methioninium (Trp-Tyr) (with M-249)). His103 serves as the catalytic Proton acceptor. Positions Tyr223–Met249 form a cross-link, tryptophyl-tyrosyl-methioninium (Tyr-Met) (with W-102). His264 provides a ligand contact to heme b.

This sequence belongs to the peroxidase family. Peroxidase/catalase subfamily. As to quaternary structure, homodimer or homotetramer. It depends on heme b as a cofactor. Formation of the three residue Trp-Tyr-Met cross-link is important for the catalase, but not the peroxidase activity of the enzyme.

It catalyses the reaction H2O2 + AH2 = A + 2 H2O. The enzyme catalyses 2 H2O2 = O2 + 2 H2O. Bifunctional enzyme with both catalase and broad-spectrum peroxidase activity. This is Catalase-peroxidase from Francisella tularensis subsp. tularensis (strain FSC 198).